The primary structure comprises 895 residues: Microsomal triglyceride transfer protein large subunit (895 aa).

The first 18 residues, methionine 1–serine 18, serve as a signal peptide directing secretion. The 632-residue stretch at leucine 28–leucine 659 folds into the Vitellogenin domain. An intrachain disulfide couples cysteine 174 to cysteine 194.

As to quaternary structure, heterodimer; heterodimerizes with the protein disulfide isomerase (P4HB/PDI). Interacts with APOB. Interacts with PRAP1.

It localises to the endoplasmic reticulum. Its subcellular location is the golgi apparatus. It carries out the reaction a 1,2-diacyl-sn-glycero-3-phosphocholine(in) = a 1,2-diacyl-sn-glycero-3-phosphocholine(out). The catalysed reaction is a 1,2-diacyl-sn-glycero-3-phosphoethanolamine(in) = a 1,2-diacyl-sn-glycero-3-phosphoethanolamine(out). The enzyme catalyses a cholesterol ester(in) = a cholesterol ester(out). It catalyses the reaction a triacyl-sn-glycerol(in) = a triacyl-sn-glycerol(out). Functionally, catalyzes the transport of triglyceride, cholesteryl ester, and phospholipid between phospholipid surfaces. Required for the assembly and secretion of plasma lipoproteins that contain apolipoprotein B. May be involved in regulating cholesteryl ester biosynthesis in cells that produce lipoproteins. This chain is Microsomal triglyceride transfer protein large subunit (MTTP), found in Mesocricetus auratus (Golden hamster).